The primary structure comprises 655 residues: ATP-dependent RNA helicase mss116, mitochondrial (655 aa).

The transit peptide at 1–56 (MMLGAVRRYGVVHALRASVPRTICRPSNSQLLRCQTSPVTACPQSVRLLHKSSPFF) directs the protein to the mitochondrion. The short motif at 84–113 (DLAERGLVDPKIIRAIVKDMNIKTMTDVQS) is the Q motif element. In terms of domain architecture, Helicase ATP-binding spans 116 to 307 (LREILQGDDV…RKTMKPNFKF (192 aa)). 129–136 (AKTGTGKT) serves as a coordination point for ATP. The short motif at 251-254 (DEAD) is the DEAD box element. Positions 341–503 (EFVTKYVEGE…TFATATVDMT (163 aa)) constitute a Helicase C-terminal domain. The disordered stretch occupies residues 594-642 (YRGSSDNMSTRPDYRGGDRDMWASNSRRGREFNSDRRESRFGNHRNADD). 2 stretches are compositionally biased toward basic and acidic residues: residues 605–614 (PDYRGGDRDM) and 621–642 (RGREFNSDRRESRFGNHRNADD).

The protein belongs to the DEAD box helicase family. DDX18/HAS1 subfamily.

The protein resides in the mitochondrion matrix. The catalysed reaction is ATP + H2O = ADP + phosphate + H(+). ATP-dependent RNA helicase required for mitochondrial splicing of group I and II introns. Also required for efficient mitochondrial translation. This Aspergillus fumigatus (strain ATCC MYA-4609 / CBS 101355 / FGSC A1100 / Af293) (Neosartorya fumigata) protein is ATP-dependent RNA helicase mss116, mitochondrial (mss116).